Reading from the N-terminus, the 160-residue chain is Cytochrome b6-f complex subunit 4 (160 aa).

Residues 1–35 (MATLKKPDLSDPKLRAKLAKGMGHNYYGEPAWPND) are Cytoplasmic-facing. A helical membrane pass occupies residues 36–56 (LLYVFPVVIMGTFACIVALSV). Over 57 to 94 (LDPAMVGEPADPFATPLEILPEWYLYPVFQILRSVPNK) the chain is Lumenal, thylakoid. Residues 95-115 (LLGVLLMASVPLGLILVPFIE) form a helical membrane-spanning segment. Residues 116-130 (NVNKFQNPFRRPVAT) lie on the Cytoplasmic side of the membrane. A helical membrane pass occupies residues 131-151 (TIFLFGTLVTIWLGIGATFPL). Over 152-160 (DKTLTLGLF) the chain is Lumenal, thylakoid.

The protein belongs to the cytochrome b family. PetD subfamily. The 4 large subunits of the cytochrome b6-f complex are cytochrome b6, subunit IV (17 kDa polypeptide, PetD), cytochrome f and the Rieske protein, while the 4 small subunits are PetG, PetL, PetM and PetN. The complex functions as a dimer.

The protein resides in the cellular thylakoid membrane. Component of the cytochrome b6-f complex, which mediates electron transfer between photosystem II (PSII) and photosystem I (PSI), cyclic electron flow around PSI, and state transitions. This is Cytochrome b6-f complex subunit 4 from Mastigocladus laminosus (Fischerella sp.).